The chain runs to 42 residues: Lebocin-like anionic peptide 1 (42 aa).

As to expression, hemolymph.

It is found in the secreted. Its function is as follows. Antimicrobial protein. Has antibacterial activity against the Gram-positive bacteria M.luteus (MIC=22.7 uM) and L.monocytogenes (MIC=90.9 uM). Lacks antibacterial activity against the Gram-positive bacteria B.circulans, S.aureus, and S.lutea, and the Gram-negative bacteria E.coli D31, E.coli ATCC 25922, and S.typhimurium. Has antifungal activity against A.niger (MIC=90.9 uM) and T.harzianum (MIC=90.9 uM), but lacks antifungal activity against S.cerevisiae, P.pastoris, Z.marxianus, C.albicans, C.fructus, and F.oxysporum. This is Lebocin-like anionic peptide 1 from Galleria mellonella (Greater wax moth).